Consider the following 745-residue polypeptide: MAVRATVSRFPIDSDAQEASGLPWGLTVTPFAAKDENGIGPACGSNGHLLPRCENCYAYFNTYCELDQWAWNCSLCGTLNGLPSDAIARYSNPHSIPEMTSSFIDLEMPLDGSEEEMTQARPVYVAAIDISSSEEFLELTKSALLAALEALSPGALFGLVTFSHKIGLYDVQGPIPVVKNVFIPPDGESSLSLELEDVMPLLQFLAPVETCKDRIAAALETLRPITSWERSAGAGQGMDSVLMGGRGFGTAMEALFNYLGSEFGNTFALARVFAFLSGPPDYGRGQLDTSRYGEQYASKRVDADRALLPEQTPFYKDLATIAVQSGVCVDLFAVTNEYTDLASLKFLSIESGGSLFLYSSTDDSTLPQDMFRMLNRPYAFNCVLRLRTSTEFKPGNSFGHFFPDPQYENLQHIICCDSYATYAYDFEFADNTGFSRHSGEQPVVQIAFQYTVVVPPEGLSNSEMSSSSRGKHTLQRRLRIRTMQFGTAHNINEIYDSVDHEVVLSLLVHKVILASLEDGVREGRALLHDWLVILTAQYNDAFNLVQYKNGNKSMSSQIDITFSQCPQLEPLPRLVFALLRNPLLRFHEEGVHPDYRIYLQCLFSVLDPSSLHCGIYPALMSYSTPDTLAYPRHSLSRAALITSGSPIFFLDAYTTLIVFYSSTADPSIPFPPPQDCLLRQTINKVKQERSITPKLVFIRGGRDDATVFENYLIEEQDVDGNGFASAMGFVSFLDDISQRVTEYMK.

Cysteine 53, cysteine 56, cysteine 73, and cysteine 76 together coordinate Zn(2+). Residues 53–76 form a zinc finger-like region; sequence CENCYAYFNTYCELDQWAWNCSLC.

It belongs to the SEC23/SEC24 family. SEC24 subfamily. As to quaternary structure, component of the coat protein complex II (COPII), composed of at least five proteins: the Sec23/24 complex, the Sec13/31 complex and Sar1. As to expression, mostly expressed in closed floral bud, pollen and flowers, and, to a lower extent, in mature siliques, roots and leaf primordia.

It is found in the cytoplasmic vesicle. Its subcellular location is the COPII-coated vesicle membrane. The protein localises to the endoplasmic reticulum membrane. It localises to the membrane. Component of the coat protein complex II (COPII) which promotes the formation of transport vesicles from the endoplasmic reticulum (ER). The coat has two main functions, the physical deformation of the endoplasmic reticulum membrane into vesicles and the selection of cargo molecules. May contribute to COPII-coated vesicles formation and ER-Golgi vesicle transport. Together with SEC23A, essential for pollen wall development and exine patterning, probably by regulating endoplasmic reticulum (ER) export of lipids and proteins (e.g. sporopollenin) necessary for pollen wall formation. Also involved in plastid physiology in anther tapetal cells. This Arabidopsis thaliana (Mouse-ear cress) protein is Protein transport protein SEC23 D.